The primary structure comprises 326 residues: Phospho-N-acetylmuramoyl-pentapeptide-transferase (326 aa).

A run of 10 helical transmembrane segments spans residues 5 to 25 (GLLI…PIFI), 51 to 71 (TPTM…LIMA), 82 to 102 (VWLL…DDFI), 122 to 142 (IIIA…TVIY), 148 to 168 (LQFD…VGAS), 180 to 200 (LLAG…WYGI), 204 to 224 (VVAV…VFNA), 229 to 249 (VFMG…ISIL), 252 to 272 (LEIL…SVII), and 304 to 324 (VVTT…YIEV).

It belongs to the glycosyltransferase 4 family. MraY subfamily. Mg(2+) serves as cofactor.

Its subcellular location is the cell membrane. It carries out the reaction UDP-N-acetyl-alpha-D-muramoyl-L-alanyl-gamma-D-glutamyl-meso-2,6-diaminopimeloyl-D-alanyl-D-alanine + di-trans,octa-cis-undecaprenyl phosphate = di-trans,octa-cis-undecaprenyl diphospho-N-acetyl-alpha-D-muramoyl-L-alanyl-D-glutamyl-meso-2,6-diaminopimeloyl-D-alanyl-D-alanine + UMP. It functions in the pathway cell wall biogenesis; peptidoglycan biosynthesis. Functionally, catalyzes the initial step of the lipid cycle reactions in the biosynthesis of the cell wall peptidoglycan: transfers peptidoglycan precursor phospho-MurNAc-pentapeptide from UDP-MurNAc-pentapeptide onto the lipid carrier undecaprenyl phosphate, yielding undecaprenyl-pyrophosphoryl-MurNAc-pentapeptide, known as lipid I. This is Phospho-N-acetylmuramoyl-pentapeptide-transferase from Oceanobacillus iheyensis (strain DSM 14371 / CIP 107618 / JCM 11309 / KCTC 3954 / HTE831).